The chain runs to 476 residues: Salicylate biosynthesis isochorismate synthase (476 aa).

A disordered region spans residues 181–202; that stretch reads RRRPSGPTAGAQGDASAQERRQ.

The protein belongs to the isochorismate synthase family.

The catalysed reaction is chorismate = isochorismate. Its pathway is siderophore biosynthesis; salicylate biosynthesis. Its function is as follows. Involved in the conversion of chorismate to salicylate. In Pseudomonas aeruginosa (strain ATCC 15692 / DSM 22644 / CIP 104116 / JCM 14847 / LMG 12228 / 1C / PRS 101 / PAO1), this protein is Salicylate biosynthesis isochorismate synthase (pchA).